The chain runs to 434 residues: Zinc finger protein kipf (434 aa).

The ZAD domain maps to 7–88 (NVCRTCMDET…EQSYQHFFRV (82 aa)). Cys-9, Cys-12, Cys-61, and Cys-64 together coordinate Zn(2+). Residues 117-173 (QLKSDRQQDTQQMTKTQKPDDDLSQKQTLQAKLQEGNIDGPPESFTLHPRKRTCRTE) form a disordered region. The C2H2-type 1; degenerate zinc finger occupies 197–219 (YNCPHCSKRFCSQTQLRTHITDL). C2H2-type zinc fingers lie at residues 221–243 (NRCP…LRNH), 249–271 (HKCF…LRTH), and 277–299 (LSCS…RREH). A disordered region spans residues 295-328 (HRREHKQRPGSSKSESTKDPDSDDSDQAQDLKPK). A phosphoserine mark is found at Ser-316 and Ser-319. 3 consecutive C2H2-type zinc fingers follow at residues 348-370 (PICD…MLTH), 377-399 (KKCT…ERGH), and 404-427 (FRCE…KRIH).

In terms of assembly, homodimer; mediated by the ZAD domain. Interacts (via C2H2 type zinc finger 4) with rhi/rhino (via Chromo domain). Dimerization is required for association with DNA and interaction with rhi/rhino. As to expression, primarily expressed in ovaries and absent from testes. In ovaries very low levels in germline stem cells and cystoblasts but abundant in developing cysts and polyploid nurse cells.

It localises to the nucleus. The protein resides in the chromosome. In terms of biological role, DNA-binding zinc finger protein that recruits chromo domain protein rhino/rhi to specific chromatin regions enriched in H3K9me2/3 histone methylation, mediating piRNA (piwi-interacting RNA) biogenesis. May bind to GC rich DNA sequences including a 5'-GRGGN-3' sequence motif. Nucleates rhi/rhino accumulation and stabilizes its expansion. Involved in piRNA transposon repression, particularly in the female ovary during oogenesis. In Drosophila melanogaster (Fruit fly), this protein is Zinc finger protein kipf.